Reading from the N-terminus, the 343-residue chain is Heat-inducible transcription repressor HrcA (343 aa).

It belongs to the HrcA family.

Functionally, negative regulator of class I heat shock genes (grpE-dnaK-dnaJ and groELS operons). Prevents heat-shock induction of these operons. In Bacillus velezensis (strain DSM 23117 / BGSC 10A6 / LMG 26770 / FZB42) (Bacillus amyloliquefaciens subsp. plantarum), this protein is Heat-inducible transcription repressor HrcA.